Here is a 341-residue protein sequence, read N- to C-terminus: Serpentine receptor class epsilon-12 (341 aa).

A run of 7 helical transmembrane segments spans residues Thr30 to Ala50, Phe57 to Val77, Ala101 to Leu121, Tyr140 to Leu160, Ile167 to Leu187, Leu230 to Phe250, and Ile262 to Met282.

It belongs to the nematode receptor-like protein sre family.

Its subcellular location is the membrane. The polypeptide is Serpentine receptor class epsilon-12 (sre-12) (Caenorhabditis elegans).